Here is a 635-residue protein sequence, read N- to C-terminus: MSILEHISSPADVKTLSYEQLDTLASEIREFLVEKVSATGGHLGPNLGVVELTLAIHRVFSSPSDPIIFDTSHQSYVHKILTGRAGAFDTLRQKDGLSGYTSRAESNHDWTESSHASASLSYADGLAKAFQLKGEKARNVVAVVGDGALTGGMCWEALNNIATGTERNVVVVVNDNGRSYSPTIGGFADNLAALRMKPSYDRVMEQGKTTLKSLGWVGERTFEALHAFKEGVKSSVIPTEMFPELGMKYIGPVNGHNTKAVEAALRYGRDHKGPLIVHVVTEKGKGYAPAENDVAELMHSTGVINPKTGEPVGTKSPGWTSVFSKELVKAGETRKDIVAITAAMAGPTGLSAFGEKFPDRLFDVGIAEQHAMTSAAGLALGGLHPVVAIYSTFLNRAFDQLLMDVGLLNLPVTIVLDRAGVTGSDGASHNGVWDFAVAGIVPGIRIAAPRDDENLKELFAEALTIDSPTVVRFPKGELPSRLSAQQRFDDGAELLHYSDSDHEDSTPSILVVAVGSLVSSVMEIVSDIEECGCNVTVVDPRWAVPVAPSIVGLAADHELVITVEDGIIHGGVGAMINEALNASEIDVPVRNLAFPEVFPEHQSRNQLLDAVGLSPRGIKTQIIAAAESLYLLDKE.

Thiamine diphosphate contacts are provided by residues H73 and 114–116; that span reads SHA. D146 is a Mg(2+) binding site. Residues 147–148, N176, Y287, and E368 contribute to the thiamine diphosphate site; that span reads GA. N176 provides a ligand contact to Mg(2+).

Belongs to the transketolase family. DXPS subfamily. In terms of assembly, homodimer. Requires Mg(2+) as cofactor. It depends on thiamine diphosphate as a cofactor.

The enzyme catalyses D-glyceraldehyde 3-phosphate + pyruvate + H(+) = 1-deoxy-D-xylulose 5-phosphate + CO2. Its pathway is metabolic intermediate biosynthesis; 1-deoxy-D-xylulose 5-phosphate biosynthesis; 1-deoxy-D-xylulose 5-phosphate from D-glyceraldehyde 3-phosphate and pyruvate: step 1/1. Catalyzes the acyloin condensation reaction between C atoms 2 and 3 of pyruvate and glyceraldehyde 3-phosphate to yield 1-deoxy-D-xylulose-5-phosphate (DXP). This Corynebacterium diphtheriae (strain ATCC 700971 / NCTC 13129 / Biotype gravis) protein is 1-deoxy-D-xylulose-5-phosphate synthase.